A 51-amino-acid chain; its full sequence is Large ribosomal subunit protein eL39 (51 aa).

Belongs to the eukaryotic ribosomal protein eL39 family.

The chain is Large ribosomal subunit protein eL39 (rpl39e) from Pyrococcus abyssi (strain GE5 / Orsay).